Here is a 615-residue protein sequence, read N- to C-terminus: Vitamin B12 transporter BtuB (615 aa).

The first 20 residues, M1 to A20, serve as a signal peptide directing secretion. The TonB box signature appears at D25 to N32. The TBDR plug domain maps to P37–T151. Cyanocob(III)alamin contacts are provided by residues S84, N91, and V109 to T110. One can recognise a TBDR beta-barrel domain in the interval K154 to F615. Transmembrane regions (beta stranded) follow at residues T157–G164, Y168–Q177, and T183–T194. Ca(2+) contacts are provided by D198, Q210, D212, and D214. 2 consecutive transmembrane segments (beta stranded) span residues Y216–E226 and D231–A247. Positions 248 and 249 each coordinate Ca(2+). A250 is a cyanocob(III)alamin binding site. D262 provides a ligand contact to Ca(2+). A run of 17 beta stranded transmembrane segments spans residues R264–N278, G280–N297, T310–D326, H329–W338, T354–G370, F372–D382, F386–I401, Y404–N418, E435–E444, V450–N459, Y474–F491, P495–A510, R518–T530, D536–D551, K559–S573, I586–V597, and A603–F615. Position 310 (T310) interacts with cyanocob(III)alamin. Position 518 (R518) interacts with cyanocob(III)alamin. A TonB C-terminal box motif is present at residues Y598–F615.

The protein belongs to the TonB-dependent receptor family. BtuB (TC 1.B.14.3.1) subfamily.

It is found in the cell outer membrane. Functionally, involved in the active translocation of vitamin B12 (cyanocobalamin) across the outer membrane to the periplasmic space. It derives its energy for transport by interacting with the trans-periplasmic membrane protein TonB. This is Vitamin B12 transporter BtuB from Enterobacter sp. (strain 638).